Consider the following 793-residue polypeptide: Phenylalanine--tRNA ligase beta subunit (793 aa).

One can recognise a tRNA-binding domain in the interval 40-159; the sequence is SKLNTKLVIG…MDEMVGREIS (120 aa). Residues 401-476 form the B5 domain; sequence NYDNVYSITL…RLYGYDNIIE (76 aa). Mg(2+) contacts are provided by aspartate 454, aspartate 460, glutamate 463, and glutamate 464. An FDX-ACB domain is found at 701-793; that stretch reads SKFQKSTRDI…NLKELKVKVR (93 aa).

Belongs to the phenylalanyl-tRNA synthetase beta subunit family. Type 1 subfamily. Tetramer of two alpha and two beta subunits. Mg(2+) serves as cofactor.

The protein localises to the cytoplasm. It catalyses the reaction tRNA(Phe) + L-phenylalanine + ATP = L-phenylalanyl-tRNA(Phe) + AMP + diphosphate + H(+). The polypeptide is Phenylalanine--tRNA ligase beta subunit (Mesoplasma florum (strain ATCC 33453 / NBRC 100688 / NCTC 11704 / L1) (Acholeplasma florum)).